The following is a 236-amino-acid chain: MICOS complex subunit MIC25 (236 aa).

A compositionally biased stretch (basic and acidic residues) spans 1–11; sequence MGSAESREGRR. The segment at 1 to 22 is disordered; that stretch reads MGSAESREGRRASFGMDEEERV. The N-myristoyl glycine moiety is linked to residue Gly2. Phosphoserine occurs at positions 13 and 31. 2 disordered regions span residues 34-86 and 109-132; these read VVNR…VQVD and EREA…DQEK. Residues 48–58 are compositionally biased toward low complexity; sequence GLLAPPAAALG. Composition is skewed to basic and acidic residues over residues 62–71 and 122–132; these read GREKDSKPPR and RRGEGGVDQEK. Residues 127–167 adopt a coiled-coil conformation; the sequence is GVDQEKQRLAQRARELESQEEELRCRDAFYKEQLGRLERQN. One can recognise a CHCH domain in the interval 195-236; sequence EPVCSGLQAQILRCYRDRLQEVLLCADLVRAYQHCVSSAHKG. Short sequence motifs (cx9C motif) lie at residues 198 to 208 and 219 to 229; these read CSGLQAQILRC and CADLVRAYQHC. Cystine bridges form between Cys198–Cys229 and Cys208–Cys219.

It belongs to the MICOS complex subunit Mic19 family. Metazoan Mic25 subfamily. Component of the mitochondrial contact site and cristae organizing system (MICOS) complex, composed of at least MICOS10/MIC10, CHCHD3/MIC19, CHCHD6/MIC25, APOOL/MIC27, IMMT/MIC60, APOO/MIC23/MIC26 and MICOS13/MIC13. This complex was also known under the names MINOS or MitOS complex. The MICOS complex associates with mitochondrial outer membrane proteins SAMM50, MTX1 and MTX2 (together described as components of the mitochondrial outer membrane sorting assembly machinery (SAM) complex) and DNAJC11, mitochondrial inner membrane protein TMEM11 and with HSPA9. The MICOS and SAM complexes together with DNAJC11 are part of a large protein complex spanning both membranes termed the mitochondrial intermembrane space bridging (MIB) complex. Interacts with DISC1. Interacts with IMMT/MIC60.

It is found in the mitochondrion inner membrane. Its subcellular location is the mitochondrion. In terms of biological role, component of the MICOS complex, a large protein complex of the mitochondrial inner membrane that plays crucial roles in the maintenance of crista junctions, inner membrane architecture, and formation of contact sites to the outer membrane. In Bos taurus (Bovine), this protein is MICOS complex subunit MIC25 (CHCHD6).